Reading from the N-terminus, the 85-residue chain is Keratin-associated protein 7-1 (85 aa).

Residues 37-82 (GSPLGYGCNGYSSLGYGFGGSSFSNLGCGYGGSFYRPWGSGSGFGY) are 12 X 2 AA repeats of G-[YCGS].

It belongs to the KRTAP type 7 family. As to quaternary structure, interacts with wool keratins. As to expression, wool.

Functionally, in the wool cortex, wool keratin intermediate filaments are embedded in an interfilamentous matrix, consisting of hair keratin-associated proteins (KRTAP), which are essential for the formation of a rigid and resistant wool shaft through their extensive disulfide bond cross-linking with abundant cysteine residues of wool keratins. The matrix proteins include the high-sulfur and high-glycine-tyrosine keratins. The polypeptide is Keratin-associated protein 7-1 (KRTAP7-1) (Ovis aries (Sheep)).